We begin with the raw amino-acid sequence, 699 residues long: tRNA 5-methylaminomethyl-2-thiouridine biosynthesis bifunctional protein MnmC (699 aa).

The tRNA (mnm(5)s(2)U34)-methyltransferase stretch occupies residues Met1–Asn260. Residues Ile282 to Leu699 are FAD-dependent cmnm(5)s(2)U34 oxidoreductase.

The protein in the N-terminal section; belongs to the methyltransferase superfamily. tRNA (mnm(5)s(2)U34)-methyltransferase family. This sequence in the C-terminal section; belongs to the DAO family. It depends on FAD as a cofactor.

The protein resides in the cytoplasm. The catalysed reaction is 5-aminomethyl-2-thiouridine(34) in tRNA + S-adenosyl-L-methionine = 5-methylaminomethyl-2-thiouridine(34) in tRNA + S-adenosyl-L-homocysteine + H(+). Functionally, catalyzes the last two steps in the biosynthesis of 5-methylaminomethyl-2-thiouridine (mnm(5)s(2)U) at the wobble position (U34) in tRNA. Catalyzes the FAD-dependent demodification of cmnm(5)s(2)U34 to nm(5)s(2)U34, followed by the transfer of a methyl group from S-adenosyl-L-methionine to nm(5)s(2)U34, to form mnm(5)s(2)U34. The sequence is that of tRNA 5-methylaminomethyl-2-thiouridine biosynthesis bifunctional protein MnmC from Shewanella oneidensis (strain ATCC 700550 / JCM 31522 / CIP 106686 / LMG 19005 / NCIMB 14063 / MR-1).